A 331-amino-acid chain; its full sequence is DSC E3 ubiquitin ligase complex subunit D (331 aa).

Residue Asn-26 is glycosylated (N-linked (GlcNAc...) asparagine). Helical transmembrane passes span 63–83 (ILIY…ILFA), 107–127 (PFIG…NFFT), and 159–179 (LFLL…LIVE). A compositionally biased stretch (basic and acidic residues) spans 197–214 (VQDHDSEERGVHRTRPES). Positions 197–225 (VQDHDSEERGVHRTRPESRSSVVGAELDE) are disordered.

In terms of assembly, component of the DSC E3 ubiquitin ligase complex composed of dscA, dscB, dscC and dscD.

It localises to the endoplasmic reticulum membrane. Its pathway is protein modification; protein ubiquitination. Its function is as follows. Component of the DSC E3 ubiquitin ligase complex which is required for the srbA transcriptional activator proteolytic cleavage to release the soluble transcription factor from the membrane in low oxygen or sterol conditions. Required for growth during hypoxia and triazole drug susceptibility, as well as for virulence in a murine model of invasive pulmonary aspergillosis (IPA). The polypeptide is DSC E3 ubiquitin ligase complex subunit D (Aspergillus fumigatus (strain CBS 144.89 / FGSC A1163 / CEA10) (Neosartorya fumigata)).